A 187-amino-acid chain; its full sequence is dCTP deaminase (187 aa).

Residues K107–R112, T131–E133, Q152, Y166, K175, and Q176 each bind dCTP. E133 (proton donor/acceptor) is an active-site residue.

Belongs to the dCTP deaminase family. Homotrimer.

The enzyme catalyses dCTP + H2O + H(+) = dUTP + NH4(+). It participates in pyrimidine metabolism; dUMP biosynthesis; dUMP from dCTP (dUTP route): step 1/2. Catalyzes the deamination of dCTP to dUTP. This is dCTP deaminase from Ehrlichia canis (strain Jake).